A 542-amino-acid polypeptide reads, in one-letter code: 1-aminocyclopropane-1-carboxylate synthase 6 (542 aa).

A disordered region spans residues 1 to 28 (MRRSGNGGAAKKKKKRSASAASERRPRA). Lys379 carries the post-translational modification N6-(pyridoxal phosphate)lysine.

The protein belongs to the class-I pyridoxal-phosphate-dependent aminotransferase family. It depends on pyridoxal 5'-phosphate as a cofactor. As to expression, expressed in leaves.

It localises to the plastid. The protein resides in the amyloplast membrane. It carries out the reaction S-adenosyl-L-methionine = 1-aminocyclopropane-1-carboxylate + S-methyl-5'-thioadenosine + H(+). The protein operates within alkene biosynthesis; ethylene biosynthesis via S-adenosyl-L-methionine; ethylene from S-adenosyl-L-methionine: step 1/2. Functionally, catalyzes the formation of 1-aminocyclopropane-1-carboxylate, a direct precursor of ethylene in higher plants. Required for the regulation of starch grain size in endosperm. This Oryza sativa subsp. japonica (Rice) protein is 1-aminocyclopropane-1-carboxylate synthase 6.